The following is a 334-amino-acid chain: Ribosomal RNA small subunit methyltransferase H (334 aa).

S-adenosyl-L-methionine contacts are provided by residues 34–36 (GGY), aspartate 52, alanine 87, aspartate 100, and glutamine 107.

The protein belongs to the methyltransferase superfamily. RsmH family.

The protein localises to the cytoplasm. It carries out the reaction cytidine(1402) in 16S rRNA + S-adenosyl-L-methionine = N(4)-methylcytidine(1402) in 16S rRNA + S-adenosyl-L-homocysteine + H(+). Its function is as follows. Specifically methylates the N4 position of cytidine in position 1402 (C1402) of 16S rRNA. The chain is Ribosomal RNA small subunit methyltransferase H from Maricaulis maris (strain MCS10) (Caulobacter maris).